Consider the following 155-residue polypeptide: 6,7-dimethyl-8-ribityllumazine synthase (155 aa).

Residues phenylalanine 22, 57–59 (AVE), and 81–83 (TVI) contribute to the 5-amino-6-(D-ribitylamino)uracil site. Residue 86-87 (GT) participates in (2S)-2-hydroxy-3-oxobutyl phosphate binding. Histidine 89 serves as the catalytic Proton donor. Phenylalanine 114 provides a ligand contact to 5-amino-6-(D-ribitylamino)uracil. Arginine 128 contacts (2S)-2-hydroxy-3-oxobutyl phosphate.

Belongs to the DMRL synthase family. Forms an icosahedral capsid composed of 60 subunits, arranged as a dodecamer of pentamers.

It catalyses the reaction (2S)-2-hydroxy-3-oxobutyl phosphate + 5-amino-6-(D-ribitylamino)uracil = 6,7-dimethyl-8-(1-D-ribityl)lumazine + phosphate + 2 H2O + H(+). The protein operates within cofactor biosynthesis; riboflavin biosynthesis; riboflavin from 2-hydroxy-3-oxobutyl phosphate and 5-amino-6-(D-ribitylamino)uracil: step 1/2. Its function is as follows. Catalyzes the formation of 6,7-dimethyl-8-ribityllumazine by condensation of 5-amino-6-(D-ribitylamino)uracil with 3,4-dihydroxy-2-butanone 4-phosphate. This is the penultimate step in the biosynthesis of riboflavin. This chain is 6,7-dimethyl-8-ribityllumazine synthase, found in Psychromonas ingrahamii (strain DSM 17664 / CCUG 51855 / 37).